The following is a 168-amino-acid chain: Photosystem I assembly protein Ycf3 (168 aa).

TPR repeat units follow at residues 35 to 68 (AFTY…EIDP), 72 to 105 (SYIL…NPFL), and 120 to 153 (GEQA…TPGN).

The protein belongs to the Ycf3 family.

Its subcellular location is the plastid. It is found in the chloroplast thylakoid membrane. Its function is as follows. Essential for the assembly of the photosystem I (PSI) complex. May act as a chaperone-like factor to guide the assembly of the PSI subunits. The chain is Photosystem I assembly protein Ycf3 from Oenothera elata subsp. hookeri (Hooker's evening primrose).